Here is a 177-residue protein sequence, read N- to C-terminus: Large ribosomal subunit protein uL6 (177 aa).

This sequence belongs to the universal ribosomal protein uL6 family. As to quaternary structure, part of the 50S ribosomal subunit.

This protein binds to the 23S rRNA, and is important in its secondary structure. It is located near the subunit interface in the base of the L7/L12 stalk, and near the tRNA binding site of the peptidyltransferase center. This chain is Large ribosomal subunit protein uL6, found in Pasteurella multocida (strain Pm70).